The following is a 163-amino-acid chain: GTP-dependent dephospho-CoA kinase (163 aa).

5 residues coordinate GTP: Asp38, Val39, Asp57, Glu115, and Asp138.

This sequence belongs to the GTP-dependent DPCK family.

It catalyses the reaction 3'-dephospho-CoA + GTP = GDP + CoA + H(+). It functions in the pathway cofactor biosynthesis; coenzyme A biosynthesis. Catalyzes the GTP-dependent phosphorylation of the 3'-hydroxyl group of dephosphocoenzyme A to form coenzyme A (CoA). The sequence is that of GTP-dependent dephospho-CoA kinase from Methanothermobacter thermautotrophicus (strain ATCC 29096 / DSM 1053 / JCM 10044 / NBRC 100330 / Delta H) (Methanobacterium thermoautotrophicum).